The primary structure comprises 646 residues: MNECNVHKEGYNELNQYLTTTQSKIFQCDKYVKVFHKLLNSNRHNTKHTGKKPFKCKKCGKSFCMLLHLCQHKRIHIRENSYRCEECGKAFIWFSTLTRHRRVHTGEKSYKYECGKSFNQDSNLTTHKRIHTGQKPYKCEECGTSFYQFSYLTRHKLIHTREKPYKCEQYGKTFNQSSTLTGHKIIHNGEKPYKCEECGKAFSIFSTPTKHKIIHTEEKSHRCEEYCKAYKESSHLTTHKRIHTGEKPYKCEECGKAFSIFSTLTKHKIIHTEEKSHRCEECGKAYKESSHLTTHKRIHTGEKPYKCEECGKTFSVFSILTKHKIIHTEEKPYKCEECGKAFKRSSTLTKHRIIHTEEKPYKCEECGKAFNQSSTLSIHKIIHTGEKPYKCEECGKAFKRSSTLTIHKMIHTGEKPYKCEECGKAFNRSSHLTTHKRIHTGHKPYKCKECGKSFSVFSTLTKHKIIHTDKKPYKCEECGKAFNRSSILSIHKKIHTGEKPYKCEECGKAFKRSSHLAGHKQIHSVQKPYKCEECGKAFSIFSTLTKHKIIHTEEKPYKCEKCGKTFYRFSNLNTHKIIHTGEKPCKCEECGKAFNHSSNLIKHKLIHTGDKPYKCEACGKAFRRSSHLSRHKIIHIGIHTEETVQK.

The C2H2-type 1; degenerate zinc finger occupies 26-48; that stretch reads FQCDKYVKVFHKLLNSNRHNTKH. C2H2-type zinc fingers lie at residues 54-76 and 82-104; these read FKCK…KRIH and YRCE…RRVH. A C2H2-type 4; degenerate zinc finger spans residues 109-131; sequence SYKYECGKSFNQDSNLTTHKRIH. Residues 137–159 form a C2H2-type 5 zinc finger; the sequence is YKCEECGTSFYQFSYLTRHKLIH. The C2H2-type 6; degenerate zinc-finger motif lies at 165–187; sequence YKCEQYGKTFNQSSTLTGHKIIH. Residues 193–215 form a C2H2-type 7; degenerate zinc finger; the sequence is YKCEECGKAFSIFSTPTKHKIIH. The C2H2-type 8; degenerate zinc-finger motif lies at 221–243; it reads HRCEEYCKAYKESSHLTTHKRIH. C2H2-type zinc fingers lie at residues 249–271, 277–299, 305–327, 333–355, 361–383, 389–411, 417–439, 445–467, 473–495, 501–523, 529–551, 557–579, 585–607, and 613–635; these read YKCE…KIIH, HRCE…KRIH, YKCE…RIIH, YKCE…KMIH, YKCE…KRIH, YKCK…KIIH, YKCE…KKIH, YKCE…KQIH, and CKCE…KLIH.

The protein resides in the nucleus. May be involved in transcriptional regulation. The polypeptide is Zinc finger protein 493 (ZNF493) (Homo sapiens (Human)).